We begin with the raw amino-acid sequence, 490 residues long: GTPase Der (490 aa).

2 consecutive EngA-type G domains span residues 3–166 (PVVA…AEAM) and 200–373 (IKLA…DSAT). Residues 9-16 (GRPNVGKS), 56-60 (DTGGI), 118-121 (NKVD), 206-213 (GKPNVGKS), 253-257 (DTAGV), and 318-321 (NKWD) contribute to the GTP site. A KH-like domain is found at 374–458 (RRVSTSMLTR…PIQLRFQEGG (85 aa)).

It belongs to the TRAFAC class TrmE-Era-EngA-EngB-Septin-like GTPase superfamily. EngA (Der) GTPase family. Associates with the 50S ribosomal subunit.

Functionally, GTPase that plays an essential role in the late steps of ribosome biogenesis. This chain is GTPase Der, found in Shewanella halifaxensis (strain HAW-EB4).